Consider the following 608-residue polypeptide: Glutamine--fructose-6-phosphate aminotransferase [isomerizing] (608 aa).

Cys2 acts as the Nucleophile; for GATase activity in catalysis. The Glutamine amidotransferase type-2 domain maps to 2-217 (CGIVGILGRE…DGDWVVLTRN (216 aa)). SIS domains lie at 284-423 (LPFD…ARGE) and 456-598 (LARE…VDQP). Residue Lys603 is the For Fru-6P isomerization activity of the active site.

Homodimer.

The protein resides in the cytoplasm. It catalyses the reaction D-fructose 6-phosphate + L-glutamine = D-glucosamine 6-phosphate + L-glutamate. In terms of biological role, catalyzes the first step in hexosamine metabolism, converting fructose-6P into glucosamine-6P using glutamine as a nitrogen source. This chain is Glutamine--fructose-6-phosphate aminotransferase [isomerizing] (glmS), found in Bradyrhizobium diazoefficiens (strain JCM 10833 / BCRC 13528 / IAM 13628 / NBRC 14792 / USDA 110).